The following is a 482-amino-acid chain: Bifunctional protein GlmU (482 aa).

Residues 1–238 are pyrophosphorylase; sequence MSAIRPAAVV…HREIAGINNR (238 aa). Residues 12 to 15, K26, Q79, and 84 to 85 each bind UDP-N-acetyl-alpha-D-glucosamine; these read LAAG and GT. Residue D110 participates in Mg(2+) binding. 4 residues coordinate UDP-N-acetyl-alpha-D-glucosamine: G147, E163, N178, and N236. Residue N236 participates in Mg(2+) binding. Residues 239–259 form a linker region; it reads VQLAEARRILNDRLLTRAMLA. Residues 260 to 482 are N-acetyltransferase; it reads GVTVVDPATT…VASRKPEGED (223 aa). The UDP-N-acetyl-alpha-D-glucosamine site is built by R341 and K359. The active-site Proton acceptor is H371. UDP-N-acetyl-alpha-D-glucosamine contacts are provided by Y374 and N385. Acetyl-CoA-binding positions include A388, 394-395, S413, A431, and R448; that span reads NY.

This sequence in the N-terminal section; belongs to the N-acetylglucosamine-1-phosphate uridyltransferase family. In the C-terminal section; belongs to the transferase hexapeptide repeat family. Homotrimer. Mg(2+) is required as a cofactor.

It localises to the cytoplasm. The catalysed reaction is alpha-D-glucosamine 1-phosphate + acetyl-CoA = N-acetyl-alpha-D-glucosamine 1-phosphate + CoA + H(+). The enzyme catalyses N-acetyl-alpha-D-glucosamine 1-phosphate + UTP + H(+) = UDP-N-acetyl-alpha-D-glucosamine + diphosphate. It functions in the pathway nucleotide-sugar biosynthesis; UDP-N-acetyl-alpha-D-glucosamine biosynthesis; N-acetyl-alpha-D-glucosamine 1-phosphate from alpha-D-glucosamine 6-phosphate (route II): step 2/2. It participates in nucleotide-sugar biosynthesis; UDP-N-acetyl-alpha-D-glucosamine biosynthesis; UDP-N-acetyl-alpha-D-glucosamine from N-acetyl-alpha-D-glucosamine 1-phosphate: step 1/1. Its pathway is bacterial outer membrane biogenesis; LPS lipid A biosynthesis. In terms of biological role, catalyzes the last two sequential reactions in the de novo biosynthetic pathway for UDP-N-acetylglucosamine (UDP-GlcNAc). The C-terminal domain catalyzes the transfer of acetyl group from acetyl coenzyme A to glucosamine-1-phosphate (GlcN-1-P) to produce N-acetylglucosamine-1-phosphate (GlcNAc-1-P), which is converted into UDP-GlcNAc by the transfer of uridine 5-monophosphate (from uridine 5-triphosphate), a reaction catalyzed by the N-terminal domain. This Streptomyces avermitilis (strain ATCC 31267 / DSM 46492 / JCM 5070 / NBRC 14893 / NCIMB 12804 / NRRL 8165 / MA-4680) protein is Bifunctional protein GlmU.